The sequence spans 132 residues: Small ribosomal subunit protein uS8 (132 aa).

It belongs to the universal ribosomal protein uS8 family. As to quaternary structure, part of the 30S ribosomal subunit. Contacts proteins S5 and S12.

In terms of biological role, one of the primary rRNA binding proteins, it binds directly to 16S rRNA central domain where it helps coordinate assembly of the platform of the 30S subunit. This is Small ribosomal subunit protein uS8 from Ehrlichia chaffeensis (strain ATCC CRL-10679 / Arkansas).